A 476-amino-acid chain; its full sequence is Trigger factor (476 aa).

The region spanning 174 to 261 is the PPIase FKBP-type domain; that stretch reads GDIAVVSFKG…LKDLKEKELP (88 aa). Residues 436 to 476 are disordered; that stretch reads KENTTKTSKTTKNSKTTKATKTTKTTKTTKTSKTQNKKEKK. Residues 440–469 are compositionally biased toward low complexity; it reads TKTSKTTKNSKTTKATKTTKTTKTTKTSKT.

It belongs to the FKBP-type PPIase family. Tig subfamily.

It is found in the cytoplasm. The catalysed reaction is [protein]-peptidylproline (omega=180) = [protein]-peptidylproline (omega=0). Its function is as follows. Involved in protein export. Acts as a chaperone by maintaining the newly synthesized protein in an open conformation. Functions as a peptidyl-prolyl cis-trans isomerase. In Prochlorococcus marinus (strain MIT 9215), this protein is Trigger factor.